The following is a 764-amino-acid chain: Mitogen-activated protein kinase kinase kinase 1b (764 aa).

Disordered regions lie at residues 1 to 81 (MVEE…IQQQ), 120 to 260 (KSIA…TATR), 325 to 348 (PNLAEEAESSAKPESSAIPDSSAM), and 360 to 392 (VPELSAKPESNAKPESEPEQDSSVEARTEHYGS). Residues 14–30 (GSWGSGEDGGSSHGGKG) are compositionally biased toward gly residues. Low complexity-rich tracts occupy residues 60–76 (VHSTSSSGSRRNPLSKS) and 125–135 (SQPLSSPSLSQ). The segment covering 136–145 (EHGEASHSND) has biased composition (basic and acidic residues). Over residues 184 to 201 (YVNSQPQNHYGRKNSPSQ) the composition is skewed to polar residues. The Protein kinase domain maps to 431–684 (WFKGDFIGSG…CDMLLTHPFI (254 aa)). Residues 437-445 (IGSGTFGSV) and K459 contribute to the ATP site. The active-site Proton acceptor is D554. A disordered region spans residues 706–764 (EERSIDVSESPSIATSSQSGSSPSVAGDAVSPASVAVRPRSMRTLRSEFSMSSPESIAS). Over residues 715–729 (SPSIATSSQSGSSPS) the composition is skewed to low complexity. The segment covering 752-764 (SEFSMSSPESIAS) has biased composition (polar residues).

It belongs to the protein kinase superfamily. STE Ser/Thr protein kinase family. MAP kinase kinase kinase subfamily.

The protein resides in the cell membrane. It carries out the reaction L-seryl-[protein] + ATP = O-phospho-L-seryl-[protein] + ADP + H(+). The enzyme catalyses L-threonyl-[protein] + ATP = O-phospho-L-threonyl-[protein] + ADP + H(+). Functionally, the CERK1, MEKK1a/b, MKK1a/b/c and MPK4a/b proteins are involved in pathogen defense. The pathway induces rapid growth inhibition, cell wall depositions and accumulation of defense-related transcripts. This protein is required for responses to chitin and acts redundantly with MEKK1a. This chain is Mitogen-activated protein kinase kinase kinase 1b (MEKK1b), found in Physcomitrium patens (Spreading-leaved earth moss).